Consider the following 645-residue polypeptide: Iron-regulated surface determinant protein B (645 aa).

Positions 1–40 (MNKQQKEFKSFYSIRKSSLGVASVAISTLLLLMSNGEAQA) are cleaved as a signal peptide. A YSIRK-G/S signaling motif motif is present at residues 12 to 23 (YSIRKSSLGVAS). A compositionally biased stretch (low complexity) spans 38–53 (AQAAAEETGGTNTEAQ). The segment at 38–113 (AQAAAEETGG…APKETKAVKP (76 aa)) is disordered. The segment covering 84-110 (KEVEAPTSETKEAKEVKEVKAPKETKA) has biased composition (basic and acidic residues). NEAT domains are found at residues 144 to 269 (SAPN…KFKT) and 341 to 458 (KMTD…TKAN). 2 residues coordinate heme: methionine 362 and tyrosine 440. Basic and acidic residues-rich tracts occupy residues 458–476 (NTDKSNKKEQQDNSAKKEA) and 489–534 (VEKE…KGEV). Residues 458–619 (NTDKSNKKEQ…LPQTGEESNK (162 aa)) are disordered. Low complexity predominate over residues 535-560 (ESSSTTPTKVVSTTQNVAKPTTASSK). A compositionally biased stretch (polar residues) spans 585–615 (NIKNTNDGHTQSQNNKNTQENKAKSLPQTGE). An LPXTG sorting signal motif is present at residues 610–614 (LPQTG). Threonine 613 bears the Pentaglycyl murein peptidoglycan amidated threonine mark. A propeptide spans 614–645 (GEESNKDMTLPLMALLALSSIVAFVLPRKRKN) (removed by sortase).

It belongs to the IsdB family. As to quaternary structure, interacts with host HBA; this interaction allows heme extraction as iron source. Interacts with IsdA.

Its subcellular location is the secreted. The protein localises to the cell wall. Its function is as follows. Cell wall-anchored surface receptor that extracts heme from oxidized metHb to enable growth on hemoglobin as a sole iron source. Rapidly extracts heme from hemoglobin and transfers it to IsdA or IsdC, which then relays it to the membrane transporter/IsdEF for internalization. Also promotes resistance to hydrogen peroxide and killing by neutrophils. The polypeptide is Iron-regulated surface determinant protein B (isdB) (Staphylococcus aureus (strain Mu3 / ATCC 700698)).